The chain runs to 82 residues: Turripeptide Lol6.1 (82 aa).

Positions 1–23 are cleaved as a signal peptide; the sequence is MRFHWIPTLTVLLVLSMSFGTEA. Positions 24-48 are excised as a propeptide; it reads IPXXXXXXXXXXXXXXXXXXXXXXX. Cystine bridges form between Cys54-Cys66, Cys58-Cys71, and Cys65-Cys77.

Expressed by the venom duct.

Its subcellular location is the secreted. Acts as a neurotoxin by inhibiting an ion channel. The polypeptide is Turripeptide Lol6.1 (Iotyrris olangoensis (Sea snail)).